The chain runs to 247 residues: MESSSTIDPAEVAKFEAMAAEWWNPHGKFKPLHQMNPCRLDYITQQIAAEFDRDLSAPLPFEGLRLLDIGCGGGLLSEPMARLGAEVIGADAAPRNIPVAKLHAEQSGLTIDYRNTTAEALAAAGERFDVVLNMEVVEHVADPLTYLTACRELLKPGGLMICSTLNRNPKSFAMAIVGAEWVMRWLPKGTHDWSKFITPDELYDLIRKAGLDPVDRKGMVFNPVSWSWSLSARDLSVNYVTASVRRS.

S-adenosyl-L-methionine is bound by residues Arg39, Gly70, Asp91, and Met134.

It belongs to the methyltransferase superfamily. UbiG/COQ3 family.

It carries out the reaction a 3-demethylubiquinol + S-adenosyl-L-methionine = a ubiquinol + S-adenosyl-L-homocysteine + H(+). The enzyme catalyses a 3-(all-trans-polyprenyl)benzene-1,2-diol + S-adenosyl-L-methionine = a 2-methoxy-6-(all-trans-polyprenyl)phenol + S-adenosyl-L-homocysteine + H(+). The protein operates within cofactor biosynthesis; ubiquinone biosynthesis. Its function is as follows. O-methyltransferase that catalyzes the 2 O-methylation steps in the ubiquinone biosynthetic pathway. The polypeptide is Ubiquinone biosynthesis O-methyltransferase (Cereibacter sphaeroides (strain ATCC 17023 / DSM 158 / JCM 6121 / CCUG 31486 / LMG 2827 / NBRC 12203 / NCIMB 8253 / ATH 2.4.1.) (Rhodobacter sphaeroides)).